We begin with the raw amino-acid sequence, 490 residues long: Probable cytosol aminopeptidase (490 aa).

Mn(2+) is bound by residues Lys-262 and Asp-267. Lys-274 is a catalytic residue. Mn(2+) contacts are provided by Asp-285, Asp-344, and Glu-346. Arg-348 is an active-site residue.

The protein belongs to the peptidase M17 family. It depends on Mn(2+) as a cofactor.

It localises to the cytoplasm. The catalysed reaction is Release of an N-terminal amino acid, Xaa-|-Yaa-, in which Xaa is preferably Leu, but may be other amino acids including Pro although not Arg or Lys, and Yaa may be Pro. Amino acid amides and methyl esters are also readily hydrolyzed, but rates on arylamides are exceedingly low.. It catalyses the reaction Release of an N-terminal amino acid, preferentially leucine, but not glutamic or aspartic acids.. Presumably involved in the processing and regular turnover of intracellular proteins. Catalyzes the removal of unsubstituted N-terminal amino acids from various peptides. This is Probable cytosol aminopeptidase from Mannheimia succiniciproducens (strain KCTC 0769BP / MBEL55E).